The chain runs to 430 residues: MKLKINSQGLKGHLKVPGDKSISHRSIMFGSIAKGKTIIHDILRGEDVLSTIEAFRALGVEIEDDGQVITVHGQGISKLKEPEKALDMGNSGTSTRLLSGILAGLPFETTLFGDDSLSKRPMDRVATPLQMMGAEIVGQTDKVKLPMTIKGSAHLKAIDYVLPVASAQVKSAVIFAALQAEGLTKVVEKEKTRSHTEEMLVQFGGEIKVSDKTSLVPGGQKLMGQEVTVPGDISSAAFWLVAGLVVENSELILENVGINETRTGILEVIQAMGGQLEILEQDEVAKAATLKVKASQLKGTEISGDLIPRLIDELPIIALLATQAEGKTIIRDAAELKVKETDRIAVVADALNSMGANIEPTDDGMIIQGGTKLHAPENAINTLGDHRIGMMVAIAALLVENGEIELERAEAIQTSYPSFFDDLEKLSENL.

Residues Lys-20, Ser-21, and Arg-25 each coordinate 3-phosphoshikimate. Residue Lys-20 participates in phosphoenolpyruvate binding. Residues Gly-92 and Arg-120 each contribute to the phosphoenolpyruvate site. 4 residues coordinate 3-phosphoshikimate: Ser-166, Gln-168, Asp-312, and Lys-339. Gln-168 provides a ligand contact to phosphoenolpyruvate. Asp-312 functions as the Proton acceptor in the catalytic mechanism. Arg-343 and Arg-387 together coordinate phosphoenolpyruvate.

Belongs to the EPSP synthase family. Monomer.

The protein localises to the cytoplasm. The catalysed reaction is 3-phosphoshikimate + phosphoenolpyruvate = 5-O-(1-carboxyvinyl)-3-phosphoshikimate + phosphate. Its pathway is metabolic intermediate biosynthesis; chorismate biosynthesis; chorismate from D-erythrose 4-phosphate and phosphoenolpyruvate: step 6/7. Its function is as follows. Catalyzes the transfer of the enolpyruvyl moiety of phosphoenolpyruvate (PEP) to the 5-hydroxyl of shikimate-3-phosphate (S3P) to produce enolpyruvyl shikimate-3-phosphate and inorganic phosphate. This is 3-phosphoshikimate 1-carboxyvinyltransferase from Lactococcus lactis subsp. cremoris (strain SK11).